Here is a 246-residue protein sequence, read N- to C-terminus: Pyridoxine 5'-phosphate synthase (246 aa).

3-amino-2-oxopropyl phosphate is bound at residue Asn12. Position 14–15 (14–15 (DH)) interacts with 1-deoxy-D-xylulose 5-phosphate. Arg23 contacts 3-amino-2-oxopropyl phosphate. Catalysis depends on His48, which acts as the Proton acceptor. The 1-deoxy-D-xylulose 5-phosphate site is built by Arg50 and His55. The active-site Proton acceptor is Glu75. Thr105 is a 1-deoxy-D-xylulose 5-phosphate binding site. His196 functions as the Proton donor in the catalytic mechanism. 3-amino-2-oxopropyl phosphate-binding positions include Gly197 and 218–219 (GH).

This sequence belongs to the PNP synthase family. As to quaternary structure, homooctamer; tetramer of dimers.

It localises to the cytoplasm. The catalysed reaction is 3-amino-2-oxopropyl phosphate + 1-deoxy-D-xylulose 5-phosphate = pyridoxine 5'-phosphate + phosphate + 2 H2O + H(+). It participates in cofactor biosynthesis; pyridoxine 5'-phosphate biosynthesis; pyridoxine 5'-phosphate from D-erythrose 4-phosphate: step 5/5. Its function is as follows. Catalyzes the complicated ring closure reaction between the two acyclic compounds 1-deoxy-D-xylulose-5-phosphate (DXP) and 3-amino-2-oxopropyl phosphate (1-amino-acetone-3-phosphate or AAP) to form pyridoxine 5'-phosphate (PNP) and inorganic phosphate. This is Pyridoxine 5'-phosphate synthase from Pseudomonas putida (strain W619).